The sequence spans 197 residues: MSFTNLYQEIREEWKSLKKSEIYDVEKSRMIGWRHGPSVVRLDHPTRIDRARALGYKSKDGFIVVRSRVRRGGSNREKIMGGRRPRRLAYNKLTRKKSLKLIAEERAADKYPNLEVLNSYYVGEDGLYKYYEVILVDKSHPNIYNDPHISWISEPQNTGRVYRGLTSAGYKVRGLRTGRKGSSKSRPSIRANGRLRR.

The interval 175-197 (LRTGRKGSSKSRPSIRANGRLRR) is disordered.

It belongs to the eukaryotic ribosomal protein eL15 family.

The protein is Large ribosomal subunit protein eL15 (rpl15e) of Thermoplasma volcanium (strain ATCC 51530 / DSM 4299 / JCM 9571 / NBRC 15438 / GSS1).